We begin with the raw amino-acid sequence, 89 residues long: Small ribosomal subunit protein uS15 (89 aa).

The protein belongs to the universal ribosomal protein uS15 family. Part of the 30S ribosomal subunit. Forms a bridge to the 50S subunit in the 70S ribosome, contacting the 23S rRNA.

One of the primary rRNA binding proteins, it binds directly to 16S rRNA where it helps nucleate assembly of the platform of the 30S subunit by binding and bridging several RNA helices of the 16S rRNA. Its function is as follows. Forms an intersubunit bridge (bridge B4) with the 23S rRNA of the 50S subunit in the ribosome. This Buchnera aphidicola subsp. Baizongia pistaciae (strain Bp) protein is Small ribosomal subunit protein uS15.